Reading from the N-terminus, the 491-residue chain is Transcription factor AP-2-alpha (491 aa).

The disordered stretch occupies residues 74 to 161 (GASNGTARLP…GQRQSQESGL (88 aa)). The PPxY motif signature appears at 111–116 (YFPPPY). Low complexity-rich tracts occupy residues 119–128 (IYPQSQDPYS) and 142–155 (QPQP…GQRQ). Glycyl lysine isopeptide (Lys-Gly) (interchain with G-Cter in SUMO2) cross-links involve residues K231 and K238. S293 is subject to Phosphoserine; by PKA. Positions 334–464 (RRKAANVTLL…YLTEALKAMD (131 aa)) are H-S-H (helix-span-helix), dimerization. The span at 468–481 (LSNNPNSHTDNSAK) shows a compositional bias: polar residues. Residues 468-491 (LSNNPNSHTDNSAKSSDKEEKHRK) are disordered. Residues 482–491 (SSDKEEKHRK) are compositionally biased toward basic and acidic residues.

Belongs to the AP-2 family. In terms of assembly, binds DNA as a dimer. Can form homodimers or heterodimers with other AP-2 family members. Interacts with WWOX. Interacts with CITED4. Interacts with UBE2I. Interacts with RALBP1 in a complex also containing EPN1 and NUMB during interphase and mitosis. Interacts with KCTD1; this interaction represses transcription activation. Interacts (via C-terminus) with CITED2 (via C-terminus); the interaction stimulates TFAP2A-transcriptional activation. Interacts (via N-terminus) with EP300 (via N-terminus); the interaction requires CITED2. Interacts with KCTD15; this interaction inhibits TFAP2A transcriptional activation.

The protein resides in the nucleus. Functionally, sequence-specific DNA-binding protein that interacts with inducible viral and cellular enhancer elements to regulate transcription of selected genes. AP-2 factors bind to the consensus sequence 5'-GCCNNNGGC-3' and activate genes involved in a large spectrum of important biological functions including proper eye, face, body wall, limb and neural tube development. They also suppress a number of genes including MCAM/MUC18, C/EBP alpha and MYC. AP-2-alpha is the only AP-2 protein required for early morphogenesis of the lens vesicle. Together with the CITED2 coactivator, stimulates the PITX2 P1 promoter transcription activation. Associates with chromatin to the PITX2 P1 promoter region. The protein is Transcription factor AP-2-alpha (TFAP2A) of Ovis aries (Sheep).